The sequence spans 319 residues: Beta-ketoacyl-[acyl-carrier-protein] synthase III (319 aa).

Active-site residues include cysteine 114 and histidine 246. The segment at 247–251 (QANIR) is ACP-binding. Residue asparagine 276 is part of the active site.

It belongs to the thiolase-like superfamily. FabH family. In terms of assembly, homodimer.

It localises to the cytoplasm. The catalysed reaction is malonyl-[ACP] + acetyl-CoA + H(+) = 3-oxobutanoyl-[ACP] + CO2 + CoA. It functions in the pathway lipid metabolism; fatty acid biosynthesis. In terms of biological role, catalyzes the condensation reaction of fatty acid synthesis by the addition to an acyl acceptor of two carbons from malonyl-ACP. Catalyzes the first condensation reaction which initiates fatty acid synthesis and may therefore play a role in governing the total rate of fatty acid production. Possesses both acetoacetyl-ACP synthase and acetyl transacylase activities. Its substrate specificity determines the biosynthesis of branched-chain and/or straight-chain of fatty acids. In Thiobacillus denitrificans (strain ATCC 25259 / T1), this protein is Beta-ketoacyl-[acyl-carrier-protein] synthase III.